The primary structure comprises 304 residues: UDP-N-acetylenolpyruvoylglucosamine reductase (304 aa).

The 166-residue stretch at 33 to 198 (RVGGPADILV…IEATIELESG (166 aa)) folds into the FAD-binding PCMH-type domain. Arg-177 is an active-site residue. Ser-227 functions as the Proton donor in the catalytic mechanism. The active site involves Glu-297.

This sequence belongs to the MurB family. The cofactor is FAD.

Its subcellular location is the cytoplasm. It carries out the reaction UDP-N-acetyl-alpha-D-muramate + NADP(+) = UDP-N-acetyl-3-O-(1-carboxyvinyl)-alpha-D-glucosamine + NADPH + H(+). It functions in the pathway cell wall biogenesis; peptidoglycan biosynthesis. Functionally, cell wall formation. The chain is UDP-N-acetylenolpyruvoylglucosamine reductase from Clostridium perfringens (strain SM101 / Type A).